The chain runs to 799 residues: Cadherin-8 (799 aa).

Residues 1-29 form the signal peptide; sequence MPERLAEMLLDLWTPLIILWITLPPCIYM. Positions 30–61 are excised as a propeptide; it reads APMNQSQVLMSGSPLELNSLGEEQRILNRSKR. Residues N33 and N57 are each glycosylated (N-linked (GlcNAc...) asparagine). 5 consecutive Cadherin domains span residues 62 to 167, 168 to 276, 277 to 391, 392 to 494, and 495 to 616; these read GWVW…APEF, LNGP…PPKF, AQSL…PPVF, SSPT…DNAP, and EFAS…YVLP. At 62-621 the chain is on the extracellular side; sequence GWVWNQMFVL…AYVLPIGLSM (560 aa). The N-linked (GlcNAc...) asparagine glycan is linked to N188. Residues N463, N473, and N544 are each glycosylated (N-linked (GlcNAc...) asparagine). Residues 622–642 traverse the membrane as a helical segment; sequence GALIAILACIILLLVIVVLFV. Residues 643–799 lie on the Cytoplasmic side of the membrane; the sequence is TLRRHKNEPL…YSVGESDKET (157 aa). Residue S795 is modified to Phosphoserine.

In terms of tissue distribution, mainly expressed in brain. Found in certain nerve cell lines, such as retinoblasts, glioma cells and neuroblasts.

The protein localises to the cell membrane. Its function is as follows. Cadherins are calcium-dependent cell adhesion proteins. They preferentially interact with themselves in a homophilic manner in connecting cells; cadherins may thus contribute to the sorting of heterogeneous cell types. The sequence is that of Cadherin-8 (CDH8) from Homo sapiens (Human).